We begin with the raw amino-acid sequence, 344 residues long: Dihydroorotate dehydrogenase (quinone) (344 aa).

FMN is bound by residues A64–K68 and T88. K68 lines the substrate pocket. N113 to F117 lines the substrate pocket. The FMN site is built by N144 and N177. Residue N177 participates in substrate binding. S180 acts as the Nucleophile in catalysis. N182 serves as a coordination point for substrate. Residues K222 and T250 each coordinate FMN. Residue N251 to T252 coordinates substrate. FMN-binding positions include G273, G302, and Y323–S324.

This sequence belongs to the dihydroorotate dehydrogenase family. Type 2 subfamily. As to quaternary structure, monomer. It depends on FMN as a cofactor.

It localises to the cell membrane. It carries out the reaction (S)-dihydroorotate + a quinone = orotate + a quinol. Its pathway is pyrimidine metabolism; UMP biosynthesis via de novo pathway; orotate from (S)-dihydroorotate (quinone route): step 1/1. Functionally, catalyzes the conversion of dihydroorotate to orotate with quinone as electron acceptor. This Polynucleobacter asymbioticus (strain DSM 18221 / CIP 109841 / QLW-P1DMWA-1) (Polynucleobacter necessarius subsp. asymbioticus) protein is Dihydroorotate dehydrogenase (quinone).